Consider the following 136-residue polypeptide: Keratin-associated protein 9-3 (136 aa).

11 consecutive repeat copies span residues 3 to 7, 21 to 25, 31 to 35, 36 to 40, 41 to 45, 46 to 50, 87 to 91, 97 to 101, 107 to 111, 117 to 121, and 126 to 130. Residues 21-130 are 11 X 5 AA repeats of C-C-[AEQVR]-[ALPTV]-[AGHST]; sequence CCQPTCTQSS…ACCCYCCQPS (110 aa).

This sequence belongs to the KRTAP type 9 family. As to quaternary structure, interacts with hair keratins.

Its function is as follows. In the hair cortex, hair keratin intermediate filaments are embedded in an interfilamentous matrix, consisting of hair keratin-associated proteins (KRTAP), which are essential for the formation of a rigid and resistant hair shaft through their extensive disulfide bond cross-linking with abundant cysteine residues of hair keratins. The matrix proteins include the high-sulfur and high-glycine-tyrosine keratins. The protein is Keratin-associated protein 9-3 of Mus musculus (Mouse).